The sequence spans 302 residues: MKMEELVREIERLKEERNAIIMAHNYQLPEIQDIADFLGDSLELARKAVNVDADVIVFVGVDFMAETAKILNPEKTVLLPTRRATCAMANMLKVEHILKAKEQYPDAPVVLYVNTTAETKAYADVTVTSANAVRIVEKLDSDVIIFGPDKNLASYVAKMTGKKVIPVPEYGHCYVHRQFTLEDVERARKLYPNAKLMVHPECEPEVQERADIIVSTGGMIRRAPEHDEWVVFTEREMVYRLQRLYPDIKFHPAKEDAICIGMKAITLNHIYESLRDMKYEVEVPEDIAEKARRAIERMLEMS.

H24 and S41 together coordinate iminosuccinate. C86 lines the [4Fe-4S] cluster pocket. Residues 112–114 (YVN) and S129 each bind iminosuccinate. C173 serves as a coordination point for [4Fe-4S] cluster. Iminosuccinate contacts are provided by residues 199–201 (HPE) and T216. C259 lines the [4Fe-4S] cluster pocket.

The protein belongs to the quinolinate synthase family. Type 2 subfamily. [4Fe-4S] cluster serves as cofactor.

The protein localises to the cytoplasm. It catalyses the reaction iminosuccinate + dihydroxyacetone phosphate = quinolinate + phosphate + 2 H2O + H(+). Its pathway is cofactor biosynthesis; NAD(+) biosynthesis; quinolinate from iminoaspartate: step 1/1. In terms of biological role, catalyzes the condensation of iminoaspartate with dihydroxyacetone phosphate to form quinolinate. The sequence is that of Quinolinate synthase from Thermococcus onnurineus (strain NA1).